A 526-amino-acid polypeptide reads, in one-letter code: Glutamate--tRNA ligase, mitochondrial (526 aa).

A mitochondrion-targeting transit peptide spans 1-38; the sequence is MLSYTSCAKLICSRYIVSKISFYSLKRCNSTAVVRTRF. 37–39 is a binding site for L-glutamate; the sequence is RFA. A 'HIGH' region motif is present at residues 42-50; sequence PTGFLHLGS. H47 lines the ATP pocket. Residues E73, 222–226, and R240 each bind L-glutamate; that span reads YHFAN. ATP is bound by residues E243 and 278-282; that span reads KLSKR. Positions 278–282 match the 'KMSKS' region motif; that stretch reads KLSKR.

Belongs to the class-I aminoacyl-tRNA synthetase family. Glutamate--tRNA ligase type 1 subfamily.

It is found in the mitochondrion. It carries out the reaction tRNA(Glu) + L-glutamate + ATP = L-glutamyl-tRNA(Glu) + AMP + diphosphate. In terms of biological role, catalyzes the attachment of glutamate to tRNA(Glu) in a two-step reaction: glutamate is first activated by ATP to form Glu-AMP and then transferred to the acceptor end of tRNA(Glu). This is Glutamate--tRNA ligase, mitochondrial (mse1) from Schizosaccharomyces pombe (strain 972 / ATCC 24843) (Fission yeast).